A 149-amino-acid chain; its full sequence is Arginine repressor (149 aa).

This sequence belongs to the ArgR family.

The protein localises to the cytoplasm. It functions in the pathway amino-acid biosynthesis; L-arginine biosynthesis [regulation]. Functionally, regulates arginine biosynthesis genes. This chain is Arginine repressor, found in Chlorobaculum parvum (strain DSM 263 / NCIMB 8327) (Chlorobium vibrioforme subsp. thiosulfatophilum).